The primary structure comprises 533 residues: Adenylate kinase 7 (533 aa).

Residues 177–426 (PVKICILGPP…EPRNYGLTDE (250 aa)) are adenylate kinase. 187–192 (AVGKSS) provides a ligand contact to ATP. Positions 207-265 (QLKDVISEAIAKLETIVAPKDIGEGKEEVEEEEEEENVEDAQELLDGIKESMEQNAGQL) are NMP. AMP is bound by residues 242–265 (ENVEDAQELLDGIKESMEQNAGQL), 292–295 (GFPK), and Gln-299. Residues 347–357 (NLPERIVAGTH) are LID. An AMP-binding site is contributed by Arg-365. Position 397 (Gly-397) interacts with ATP. A coiled-coil region spans residues 419 to 487 (RNYGLTDEEK…EERELLEAQS (69 aa)). Positions 489–533 (PLRNYLMTYVMPTLIQGLNECCNVRPEDPVDFLAEYLFKNNPEAQ) are DPY-30.

The protein in the central section; belongs to the adenylate kinase family. It in the C-terminal section; belongs to the dpy-30 family.

The protein localises to the cytoplasm. The protein resides in the cytosol. It is found in the cell projection. It localises to the cilium. Its subcellular location is the flagellum. The catalysed reaction is AMP + ATP = 2 ADP. It carries out the reaction a 2'-deoxyribonucleoside 5'-diphosphate + ATP = a 2'-deoxyribonucleoside 5'-triphosphate + ADP. It catalyses the reaction a ribonucleoside 5'-diphosphate + ATP = a ribonucleoside 5'-triphosphate + ADP. Nucleoside monophosphate (NMP) kinase that catalyzes the reversible transfer of the terminal phosphate group between nucleoside triphosphates and monophosphates. Has highest activity toward AMP, and weaker activity toward dAMP, CMP and dCMP. Also displays broad nucleoside diphosphate kinase activity. Involved in maintaining ciliary structure and function. This Macaca fascicularis (Crab-eating macaque) protein is Adenylate kinase 7 (AK7).